A 291-amino-acid chain; its full sequence is MASSSVSSLQFLFVTPQTPSSLKPNSTLSFFSLPSSSLNLSLSSSSTGLCSIKPFESSFSTRVALSGFDQLEDDVEVAEQPRFSEDLKLFVGNLPFSVDSAALAGLFERAGNVEMVEVIYDKLTGRSRGFGFVTMSTKEEVEAAEQQFNGYEIDGRAIRVNAGPAPAKRENSSFGGGRGGNSSYGGGRDGNSSFGGARGGRSVDSSNRVYVGNLSWGVDDLALKELFSEQGNVVDAKVVYDRDSGRSRGFGFVTYSSSKEVNDAIDSLNGVDLDGRSIRVSAAEERPRRQF.

An RRM 1 domain is found at Leu87–Ala165. Residues Pro164 to Ser202 are disordered. The linker (Gly-rich) stretch occupies residues Pro166 to Ser206. The segment covering Phe174–Asp189 has biased composition (gly residues). The region spanning Asn207–Glu285 is the RRM 2 domain.

Its subcellular location is the plastid. It localises to the chloroplast. In terms of biological role, could be involved in splicing and/or processing of chloroplast RNA's. The chain is 29 kDa ribonucleoprotein B, chloroplastic from Nicotiana sylvestris (Wood tobacco).